The sequence spans 390 residues: 8-amino-7-oxononanoate synthase (390 aa).

Arg19 serves as a coordination point for substrate. 106–107 (GY) lines the pyridoxal 5'-phosphate pocket. His131 contacts substrate. Residues Ser176, His204, and Thr233 each contribute to the pyridoxal 5'-phosphate site. Position 236 is an N6-(pyridoxal phosphate)lysine (Lys236). Thr350 contributes to the substrate binding site.

This sequence belongs to the class-II pyridoxal-phosphate-dependent aminotransferase family. BioF subfamily. Homodimer. It depends on pyridoxal 5'-phosphate as a cofactor.

It catalyses the reaction 6-carboxyhexanoyl-[ACP] + L-alanine + H(+) = (8S)-8-amino-7-oxononanoate + holo-[ACP] + CO2. The protein operates within cofactor biosynthesis; biotin biosynthesis. Functionally, catalyzes the decarboxylative condensation of pimeloyl-[acyl-carrier protein] and L-alanine to produce 8-amino-7-oxononanoate (AON), [acyl-carrier protein], and carbon dioxide. This Pseudomonas putida (strain ATCC 700007 / DSM 6899 / JCM 31910 / BCRC 17059 / LMG 24140 / F1) protein is 8-amino-7-oxononanoate synthase.